Consider the following 578-residue polypeptide: MTNTLAGPDRSRDISQPLEKLGPDEAMKVRSDYLRGTINEGLLDAITGAVSGDDNAKLMKFHGVYVQDDRDLRDERRRQKLEPAYSFLIRLRLPGGVATAAQWLKLDELARAYGNSSLRVTTRQTFQFHWVLKNDLKATIQGLHEVLIDTIAACGDVVRGVMASVNPSLSSLHAEVYDDARRVSEHAMPNMRAYHEIWYGEERVATSEPEEPFLGKQYLPRKFKIGLVIPPYNDIDVYTQDLGFIAIAENGRLIGYNIVIGGGMGRTDQAPETYPRLGDVIGFIPKEQILAATDAVVGTQRDFGDRTVRAHARFKYTIDTHGLDFIQGEIERRLGYALEPARPFEFVSNGDAYGWAKGENGRYHYTLFIENGRIVNREDVALLDGLRAIAAVHQGSFRMTPNQNVVIADIPAKQKPKIAALLREYGLDHRNEQSLLRLNSMACVALPTCGLAMAESERYLPTLVTKIETILAEKGLEKEPITIRMTGCPNGCARPYVAEIALTGRAPGKYNLYFGGGFHGQRLNKMYLENVGEDAILQAVDAIAGHYAQDKNPGEHFGDFTIRAGYVKEVRAGREFND.

The segment at 1–21 (MTNTLAGPDRSRDISQPLEKL) is disordered. The [4Fe-4S] cluster site is built by cysteine 443, cysteine 449, cysteine 488, and cysteine 492. Residue cysteine 492 coordinates siroheme.

Belongs to the nitrite and sulfite reductase 4Fe-4S domain family. As to quaternary structure, alpha(8)-beta(8). The alpha component is a flavoprotein, the beta component is a hemoprotein. The cofactor is siroheme. Requires [4Fe-4S] cluster as cofactor.

The catalysed reaction is hydrogen sulfide + 3 NADP(+) + 3 H2O = sulfite + 3 NADPH + 4 H(+). Its pathway is sulfur metabolism; hydrogen sulfide biosynthesis; hydrogen sulfide from sulfite (NADPH route): step 1/1. In terms of biological role, component of the sulfite reductase complex that catalyzes the 6-electron reduction of sulfite to sulfide. This is one of several activities required for the biosynthesis of L-cysteine from sulfate. This is Sulfite reductase [NADPH] hemoprotein beta-component from Methylocella silvestris (strain DSM 15510 / CIP 108128 / LMG 27833 / NCIMB 13906 / BL2).